We begin with the raw amino-acid sequence, 551 residues long: HTH-type transcriptional regulator SgrR (551 aa).

The HTH marR-type domain maps to 1 to 116; that stretch reads MPSARLQQQF…LVSHLGRSFR (116 aa). The H-T-H motif DNA-binding region spans 26 to 49; it reads LNELAALLSCSRRHMRTLLNTMQD. Residues 163–492 are solute-binding; that stretch reads ELEADIAHHW…IDWQADAARW (330 aa).

Functionally, activates the small RNA gene sgrS under glucose-phosphate stress conditions as well as yfdZ. Represses its own transcription under both stress and non-stress conditions. Might act as a sensor of the intracellular accumulation of phosphoglucose by binding these molecules in its C-terminal solute-binding domain. This chain is HTH-type transcriptional regulator SgrR, found in Escherichia coli O1:K1 / APEC.